The primary structure comprises 311 residues: Protein N-terminal asparagine amidohydrolase (311 aa).

Monomer.

It is found in the cytoplasm. The catalysed reaction is N-terminal L-asparaginyl-[protein] + H2O + H(+) = N-terminal L-aspartyl-[protein] + NH4(+). Functionally, N-terminal asparagine deamidase that mediates deamidation of N-terminal asparagine residues to aspartate. Required for the ubiquitin-dependent turnover of intracellular proteins that initiate with Met-Asn. These proteins are acetylated on the retained initiator methionine and can subsequently be modified by the removal of N-acetyl methionine by acylaminoacid hydrolase (AAH). Conversion of the resulting N-terminal asparagine to aspartate by NTAN1/PNAD renders the protein susceptible to arginylation, polyubiquitination and degradation as specified by the N-end rule. This enzyme does not act on substrates with internal or C-terminal asparagines and does not act on glutamine residues in any position. This is Protein N-terminal asparagine amidohydrolase (NTAN1) from Sus scrofa (Pig).